The chain runs to 41 residues: MKVVSSLKSLKKRDKDCQIVKRRGKIFVINKKNKRFRAKQG.

Belongs to the bacterial ribosomal protein bL36 family.

The protein is Large ribosomal subunit protein bL36 of Rickettsia prowazekii (strain Madrid E).